Reading from the N-terminus, the 60-residue chain is Pepsin-3 (60 aa).

Residues isoleucine 1–phenylalanine 35 constitute a propeptide, activation peptide.

It belongs to the peptidase A1 family.

The chain is Pepsin-3 from Thunnus orientalis (North Pacific bluefin tuna).